The sequence spans 445 residues: Putrescine hydroxycinnamoyltransferase 1 (445 aa).

Catalysis depends on proton acceptor residues histidine 154 and aspartate 388.

This sequence belongs to the plant acyltransferase family. Expressed in leaves.

Its function is as follows. Hydroxycinnamoyl transferase that catalyzes the transfer of an acyl from p-coumaryol-CoA to putrescine, to produce coumaroyl putrescine. The chain is Putrescine hydroxycinnamoyltransferase 1 from Oryza sativa subsp. japonica (Rice).